We begin with the raw amino-acid sequence, 632 residues long: Cyclic GMP-AMP synthase-like receptor 2 (632 aa).

Mg(2+)-binding residues include aspartate 71, aspartate 73, and aspartate 181. Residue aspartate 295 coordinates Mn(2+).

Belongs to the mab-21 family. Mg(2+) is required as a cofactor. Requires Mn(2+) as cofactor.

Its function is as follows. Nucleotidyltransferase that catalyzes the formation of some cyclic nucleotide and plays a key role in innate immunity. Directly binds some unknown ligand, activating the nucleotidyltransferase activity, leading to synthesis of a second messenger that binds to and activates Sting, thereby triggering the immune response via activation of the NF-kappa-B transcription factor. This Crassostrea virginica (Eastern oyster) protein is Cyclic GMP-AMP synthase-like receptor 2.